Here is a 497-residue protein sequence, read N- to C-terminus: Signal recognition particle receptor FtsY (497 aa).

Disordered stretches follow at residues 1 to 63 (MAKE…TEAE) and 79 to 130 (AESE…EWQA). The segment covering 87 to 96 (EAEVVAQPEP) has biased composition (low complexity). Residues 300–307 (GVNGVGKT), 382–386 (DTAGR), and 446–449 (TKLD) contribute to the GTP site.

It belongs to the GTP-binding SRP family. FtsY subfamily. In terms of assembly, part of the signal recognition particle protein translocation system, which is composed of SRP and FtsY. SRP is a ribonucleoprotein composed of Ffh and a 4.5S RNA molecule. Binds to SecY. Post-translationally, proteolytically cleaved. The cleavage may regulate function and subcellular location of FtsY. Full-length FtsY is found primarily associated with the membrane, while cleaved protein is predominantly present in the cytoplasm.

It localises to the cell inner membrane. Its subcellular location is the cytoplasm. The catalysed reaction is GTP + H2O = GDP + phosphate + H(+). With respect to regulation, conformation of the Ffh-FtsY complex and regulation of its GTPase activity are modulated by the 4.5S RNA. Formation of the FfH-FtsY complex leads to a mutual stimulation of both GTPases. In terms of biological role, involved in targeting and insertion of nascent membrane proteins into the cytoplasmic membrane. Acts as a receptor for the complex formed by the signal recognition particle (SRP) and the ribosome-nascent chain (RNC). Interaction with SRP-RNC leads to the transfer of the RNC complex to the Sec translocase for insertion into the membrane, the hydrolysis of GTP by both Ffh and FtsY, and the dissociation of the SRP-FtsY complex into the individual components. The polypeptide is Signal recognition particle receptor FtsY (Escherichia coli (strain K12)).